A 421-amino-acid chain; its full sequence is Proton/sodium-glutamate symport protein (421 aa).

Residues 1–3 (MRK) are Cytoplasmic-facing. A helical transmembrane segment spans residues 4–24 (IGLAWQIFIGLILGIIVGAIF). The Extracellular segment spans residues 25 to 43 (YGNPKVATYLQPIGDIFLR). A helical membrane pass occupies residues 44 to 64 (LIKMIVIPIVISSLVVGVASV). Residues 65–77 (GDLKKLGKLGGKT) lie on the Cytoplasmic side of the membrane. The chain crosses the membrane as a helical span at residues 78 to 98 (IIYFEIITTIAIVVGLLAANI). At 99 to 148 (FQPGTGVNMKSLEKTDIQSYVDTTNEVQHHSMVETFVNIVPKNIFESLTK) the chain is on the extracellular side. Residues 149–169 (GDMLPIIFFSVMFGLGVAAIG) form a helical membrane-spanning segment. Over 170-198 (EKGKPVLQFFQGTAEAMFYVTNQIMKFAP) the chain is Cytoplasmic. Residues 199 to 219 (FGVFALIGVTVSKFGVESLIP) traverse the membrane as a helical segment. Residues 220–222 (LSK) are Extracellular-facing. The chain crosses the membrane as a helical span at residues 223–243 (LVIVVYATMVFFIFVVLGGVA). Lys244 is a topological domain (cytoplasmic). Residues 245–265 (LFGINIFHIIKILKDELILAY) form a helical membrane-spanning segment. Over 266 to 306 (STASSETVLPKIMEKMENFGCPKAITSFVIPTGYSFNLDGS) the chain is Extracellular. The helical transmembrane segment at 307–327 (TLYQALAAIFIAQLYGIDMPI) threads the bilayer. Over 328–330 (SQQ) the chain is Cytoplasmic. Transmembrane regions (helical) follow at residues 331-351 (ISLLLVLMVTSKGIAGVPGVS) and 352-372 (FVVLLATLGTVGIPIEGLAFI). Topologically, residues 373 to 421 (AGIDRILDMARTAVNVIGNSLAAIIMSKWEGQYNEEKGKQYIAQLQQSA) are cytoplasmic.

The protein belongs to the dicarboxylate/amino acid:cation symporter (DAACS) (TC 2.A.23) family. In terms of assembly, homotrimer.

Its subcellular location is the cell membrane. Functionally, this carrier protein is part of the Na(+)-dependent, binding-protein-independent glutamate-aspartate transport system. The polypeptide is Proton/sodium-glutamate symport protein (gltT) (Geobacillus stearothermophilus (Bacillus stearothermophilus)).